A 219-amino-acid polypeptide reads, in one-letter code: Protein RhiB (219 aa).

Over residues 174–195 (AGISQQGNAAGTSISSKSTGSP) the composition is skewed to polar residues. Residues 174–201 (AGISQQGNAAGTSISSKSTGSPENPART) form a disordered region.

Its function is as follows. May be involved in plant-microbe interaction. The sequence is that of Protein RhiB (rhiB) from Rhizobium leguminosarum bv. viciae.